The chain runs to 723 residues: Catalase-peroxidase (723 aa).

The segment at residues 97 to 225 (WHAAGSYRVT…LAAVQMGLIY (129 aa)) is a cross-link (tryptophyl-tyrosyl-methioninium (Trp-Tyr) (with M-251)). The active-site Proton acceptor is His-98. Positions 225 to 251 (YVNPEGVNGKSDPLATAAQMRETFARM) form a cross-link, tryptophyl-tyrosyl-methioninium (Tyr-Met) (with W-97). His-266 provides a ligand contact to heme b.

Belongs to the peroxidase family. Peroxidase/catalase subfamily. In terms of assembly, homodimer or homotetramer. The cofactor is heme b. In terms of processing, formation of the three residue Trp-Tyr-Met cross-link is important for the catalase, but not the peroxidase activity of the enzyme.

The catalysed reaction is H2O2 + AH2 = A + 2 H2O. The enzyme catalyses 2 H2O2 = O2 + 2 H2O. Functionally, bifunctional enzyme with both catalase and broad-spectrum peroxidase activity. The sequence is that of Catalase-peroxidase from Agrobacterium fabrum (strain C58 / ATCC 33970) (Agrobacterium tumefaciens (strain C58)).